A 345-amino-acid polypeptide reads, in one-letter code: MYKVAVIKGDGIGPEVIDAAIRVVKSVTDKIKFYEFEGGLSVFKKYGVPIREEDLEEIRKMDAILFGATTTPFDVPRYKSLIITLRKELDLYANLRIIPNFKLRKEIIIVRENSEGLYSGEGAYDSNKVVDFRIITRKGAERIAKFAVKLAKDRSTFLTFVHKANILESDRFFRKIVLDIARKEDVKVREEIVDSFTIKLVKDPWNLGIILSENMFGDILSDLATIHAGSIGIVPSGNYGEDIALFEPIHGSAPDIAGKGIANPIGAILSAAMMLDYLGLDGSIIWKAVGRYVRRGNLTPDMEGRATTLEVTNGIISEIYRLDEYEIDEVWRDEVRLGRILLEIS.

An NADH-binding site is contributed by 69–71; sequence TTT. Arginine 86, arginine 96, arginine 111, tyrosine 118, lysine 163, and asparagine 165 together coordinate (2R,3S)-homoisocitrate. Asparagine 165 lines the NADH pocket. Mg(2+) contacts are provided by aspartate 194, aspartate 218, and aspartate 222. Residues 251–255 and asparagine 263 each bind NADH; that span reads GSAPD.

It belongs to the isocitrate and isopropylmalate dehydrogenases family. Mn(2+) serves as cofactor. Mg(2+) is required as a cofactor.

It catalyses the reaction D-threo-isocitrate + NAD(+) = 2-oxoglutarate + CO2 + NADH. The enzyme catalyses (2R,3S)-homoisocitrate + NAD(+) = 2-oxoadipate + CO2 + NADH. Its pathway is amino-acid biosynthesis; L-lysine biosynthesis via AAA pathway; L-alpha-aminoadipate from 2-oxoglutarate: step 4/5. Its function is as follows. Catalyzes the NAD(+)-dependent oxidative decarboxylation of homoisocitrate to 2-oxoadipate (alpha-ketoadipate), and of isocitrate to 2-oxoglutarate, at near equal efficiency. May thus play a dual role in glutamate and lysine biosynthesis in vivo. Preferentially uses NAD over NADP. The chain is Isocitrate/homoisocitrate dehydrogenase from Pyrococcus horikoshii (strain ATCC 700860 / DSM 12428 / JCM 9974 / NBRC 100139 / OT-3).